The chain runs to 301 residues: rRNA methyltransferase 1, mitochondrial (301 aa).

The N-terminal 11 residues, 1–11 (MIRSRVNLARE), are a transit peptide targeting the mitochondrion. The disordered stretch occupies residues 121–141 (YNNKNGQDSPHNDLNEGKSSS).

It belongs to the class IV-like SAM-binding methyltransferase superfamily. RNA methyltransferase TrmH family.

The protein localises to the mitochondrion. It carries out the reaction a guanosine in 21S rRNA + S-adenosyl-L-methionine = a 2'-O-methylguanosine in 21S rRNA + S-adenosyl-L-homocysteine + H(+). Functionally, S-adenosyl-L-methionine-dependent 2'-O-ribose methyltransferase that catalyzes the formation of the 2'-O-methylguanosine corresponding to position 2270 in S.cerevisiae 21S mitochondrial large subunit ribosomal RNA (mtLSU rRNA), a universally conserved modification in the peptidyl transferase domain of the mtLSU rRNA. The chain is rRNA methyltransferase 1, mitochondrial from Schizosaccharomyces pombe (strain 972 / ATCC 24843) (Fission yeast).